The chain runs to 360 residues: Phospho-N-acetylmuramoyl-pentapeptide-transferase (360 aa).

The Periplasmic portion of the chain corresponds to 1–25; the sequence is MLVWLAEHLVKYYSGFNVFSYLTFR. Residues 26–46 form a helical membrane-spanning segment; it reads AIVSLLTALFISLWMGPRMIA. Residues 47-71 are Cytoplasmic-facing; that stretch reads HLQKLSFGQVVRNDGPESHFSKRGT. A helical transmembrane segment spans residues 72–92; the sequence is PTMGGIMILTAIVISVLLWAY. Residue P93 is a topological domain, periplasmic. Residues 94–114 form a helical membrane-spanning segment; it reads SNPYVWCVLVVLVGYGVIGFV. Topologically, residues 115-131 are cytoplasmic; it reads DDYRKVVRKDTKGLIAR. Residues 132 to 152 traverse the membrane as a helical segment; it reads WKYFWMSVIALGVAFALYLVG. Residues 153–167 are Periplasmic-facing; it reads KDTPATQLVVPFFKD. The chain crosses the membrane as a helical span at residues 168-188; sequence VMPQLGLFYILLAYFVIVGTG. Topologically, residues 189-198 are cytoplasmic; sequence NAVNLTDGLD. A helical membrane pass occupies residues 199–219; that stretch reads GLAIMPTVFVAGGFALVAWAT. The Periplasmic portion of the chain corresponds to 220 to 235; sequence GNMNFASYLHIPYLRH. The helical transmembrane segment at 236–256 threads the bilayer; that stretch reads AGELVIVCTAIVGAGLGFLWF. Residues 257–262 are Cytoplasmic-facing; that stretch reads NTYPAQ. A helical transmembrane segment spans residues 263 to 283; it reads VFMGDVGSLALGGALGIIAVL. Residues 284–287 lie on the Periplasmic side of the membrane; it reads LRQE. A helical transmembrane segment spans residues 288–308; that stretch reads FLLVIMGGVFVVETLSVILQV. The Cytoplasmic segment spans residues 309–337; the sequence is GSFKLRGQRIFRMAPIHHHYELKGWPEPR. Residues 338–358 traverse the membrane as a helical segment; that stretch reads VIVRFWIISLMLVLIGLATLK. Over 359 to 360 the chain is Periplasmic; that stretch reads VR.

It belongs to the glycosyltransferase 4 family. MraY subfamily. Mg(2+) is required as a cofactor.

The protein localises to the cell inner membrane. It catalyses the reaction UDP-N-acetyl-alpha-D-muramoyl-L-alanyl-gamma-D-glutamyl-meso-2,6-diaminopimeloyl-D-alanyl-D-alanine + di-trans,octa-cis-undecaprenyl phosphate = di-trans,octa-cis-undecaprenyl diphospho-N-acetyl-alpha-D-muramoyl-L-alanyl-D-glutamyl-meso-2,6-diaminopimeloyl-D-alanyl-D-alanine + UMP. The protein operates within cell wall biogenesis; peptidoglycan biosynthesis. Catalyzes the initial step of the lipid cycle reactions in the biosynthesis of the cell wall peptidoglycan: transfers peptidoglycan precursor phospho-MurNAc-pentapeptide from UDP-MurNAc-pentapeptide onto the lipid carrier undecaprenyl phosphate, yielding undecaprenyl-pyrophosphoryl-MurNAc-pentapeptide, known as lipid I. The polypeptide is Phospho-N-acetylmuramoyl-pentapeptide-transferase (Escherichia coli O157:H7).